The sequence spans 274 residues: tRNA-cytidine(32) 2-sulfurtransferase (274 aa).

Residues 40–45 (SGGKDS) carry the PP-loop motif motif. Residues C115, C118, and C206 each coordinate [4Fe-4S] cluster.

It belongs to the TtcA family. Homodimer. The cofactor is Mg(2+). Requires [4Fe-4S] cluster as cofactor.

Its subcellular location is the cytoplasm. The catalysed reaction is cytidine(32) in tRNA + S-sulfanyl-L-cysteinyl-[cysteine desulfurase] + AH2 + ATP = 2-thiocytidine(32) in tRNA + L-cysteinyl-[cysteine desulfurase] + A + AMP + diphosphate + H(+). Its pathway is tRNA modification. Its function is as follows. Catalyzes the ATP-dependent 2-thiolation of cytidine in position 32 of tRNA, to form 2-thiocytidine (s(2)C32). The sulfur atoms are provided by the cysteine/cysteine desulfurase (IscS) system. The polypeptide is tRNA-cytidine(32) 2-sulfurtransferase (Ectopseudomonas mendocina (strain ymp) (Pseudomonas mendocina)).